A 79-amino-acid polypeptide reads, in one-letter code: Cytochrome b (79 aa).

3 consecutive transmembrane segments (helical) span residues 1–7, 31–52, and 67–79; these read TALFLAM, WLIR…YLHI, and WNIG…LTMM. Residues His37 and His51 each contribute to the heme b site.

It belongs to the cytochrome b family. As to quaternary structure, the cytochrome bc1 complex contains 3 respiratory subunits (MT-CYB, CYC1 and UQCRFS1), 2 core proteins (UQCRC1 and UQCRC2) and probably 6 low-molecular weight proteins. Heme b is required as a cofactor.

Its subcellular location is the mitochondrion inner membrane. Functionally, component of the ubiquinol-cytochrome c reductase complex (complex III or cytochrome b-c1 complex) that is part of the mitochondrial respiratory chain. The b-c1 complex mediates electron transfer from ubiquinol to cytochrome c. Contributes to the generation of a proton gradient across the mitochondrial membrane that is then used for ATP synthesis. In Julidochromis regani (Convict julie), this protein is Cytochrome b (mt-cyb).